Here is a 348-residue protein sequence, read N- to C-terminus: Structural glycoprotein p40 (348 aa).

The protein belongs to the baculoviridae gp41 family. Post-translationally, O-glycosylated; contains N-acetylglucosamine side chains.

This is Structural glycoprotein p40 (P40) from Bombyx mori nuclear polyhedrosis virus (BmNPV).